A 787-amino-acid polypeptide reads, in one-letter code: Protein translocase subunit SecA (787 aa).

ATP is bound by residues Q85, 103-107 (GEGKT), and D492.

It belongs to the SecA family. In terms of assembly, monomer and homodimer. Part of the essential Sec protein translocation apparatus which comprises SecA, SecYEG and auxiliary proteins SecDF. Other proteins may also be involved.

The protein resides in the cell membrane. It localises to the cytoplasm. It catalyses the reaction ATP + H2O + cellular proteinSide 1 = ADP + phosphate + cellular proteinSide 2.. Functionally, part of the Sec protein translocase complex. Interacts with the SecYEG preprotein conducting channel. Has a central role in coupling the hydrolysis of ATP to the transfer of proteins into and across the cell membrane, serving as an ATP-driven molecular motor driving the stepwise translocation of polypeptide chains across the membrane. This Latilactobacillus sakei subsp. sakei (strain 23K) (Lactobacillus sakei subsp. sakei) protein is Protein translocase subunit SecA.